Here is a 288-residue protein sequence, read N- to C-terminus: MSSSMWYIMQSIQSKYSLSERLIRTIAAIRSFPHDNVEDLIRGGADVNCTHGTLKPLHCACMVSDADCVELLLEKGAEVNALDGYNRTALHYAAEKDEACVEVLLEYGANPNALDGNRDTPLHWAAFKNNAECVRALLESGASVNALDYNNDTPLSWAAMKGNLESVSILLDYGAEVRVINLKGQTPISRLVALLVRGLGTEKEDSCFELLHRAVGHFELRKNGTMPREVAKDQQLCEKLTVLCSAPGTLKTLSRYAVRRSLGLQYLPDAVKGLPLPASLKEYLLLIE.

Position 17 is a phosphoserine (serine 17). ANK repeat units lie at residues 52-81, 85-113, 117-146, and 150-179; these read GTLK…EVNA, YNRT…NPNA, NRDT…SVNA, and NNDT…EVRV. An SOCS box domain is found at 235-288; that stretch reads QLCEKLTVLCSAPGTLKTLSRYAVRRSLGLQYLPDAVKGLPLPASLKEYLLLIE.

It belongs to the ankyrin SOCS box (ASB) family. Interacts with TBK1; this interaction promotes TBK1 proteasomal degradation. Phosphorylated by TBK1.

Its subcellular location is the cytoplasm. It functions in the pathway protein modification; protein ubiquitination. Its function is as follows. May be a substrate-recognition component of a SCF-like ECS (Elongin-Cullin-SOCS-box protein) E3 ubiquitin-protein ligase complex which mediates the ubiquitination and subsequent proteasomal degradation of target proteins. Inhibits IFN-beta production through the IRF3 signaling pathway by targeting TBK1 via 'Lys-48'-linked ubiquitination, leading to its proteasomal degradation. This Bos taurus (Bovine) protein is Ankyrin repeat and SOCS box protein 8 (ASB8).